Consider the following 343-residue polypeptide: Protein RecA (343 aa).

Residue 68–75 (GPESGGKT) participates in ATP binding.

This sequence belongs to the RecA family.

The protein resides in the cytoplasm. Can catalyze the hydrolysis of ATP in the presence of single-stranded DNA, the ATP-dependent uptake of single-stranded DNA by duplex DNA, and the ATP-dependent hybridization of homologous single-stranded DNAs. It interacts with LexA causing its activation and leading to its autocatalytic cleavage. The protein is Protein RecA of Syntrophus aciditrophicus (strain SB).